The sequence spans 299 residues: Ribosomal RNA small subunit methyltransferase A (299 aa).

Positions 44, 46, 71, 92, 122, and 141 each coordinate S-adenosyl-L-methionine.

Belongs to the class I-like SAM-binding methyltransferase superfamily. rRNA adenine N(6)-methyltransferase family. RsmA subfamily.

The protein resides in the cytoplasm. The catalysed reaction is adenosine(1518)/adenosine(1519) in 16S rRNA + 4 S-adenosyl-L-methionine = N(6)-dimethyladenosine(1518)/N(6)-dimethyladenosine(1519) in 16S rRNA + 4 S-adenosyl-L-homocysteine + 4 H(+). Functionally, specifically dimethylates two adjacent adenosines (A1518 and A1519) in the loop of a conserved hairpin near the 3'-end of 16S rRNA in the 30S particle. May play a critical role in biogenesis of 30S subunits. The polypeptide is Ribosomal RNA small subunit methyltransferase A (Rhodococcus erythropolis (strain PR4 / NBRC 100887)).